We begin with the raw amino-acid sequence, 311 residues long: MEVPEDVKRRLTLPFEENFFAGHTACQGCGASLGLRYVLKAYGRKTILVIPACCSTIIAGPWPYSALNANLFHTAFETTGAVISGIEAALKALGYKVKGEDGIMVVGWAGDGGTADIGLQALSGFLERGHDALYIMYDNEAYMNTGIQRSSSTPYGAWTTNTPGGKRHFLEKRHKKKVIDIVIAHRIPYAATASVAYPEDFLRKLKKAQKIPGPSFIQLFAPCPTGWRAPTDKTIEIARLAVQTAYFPLFEYENGKYKINMPNPKKEPKPIEEFLKLQGRFKYMTKEDIEVLQKWVLEEWERLKKLAEVFG.

Heterotetramer of one alpha, one beta, one delta and one gamma chain.

The catalysed reaction is 3-methyl-2-oxobutanoate + 2 oxidized [2Fe-2S]-[ferredoxin] + CoA = 2-methylpropanoyl-CoA + 2 reduced [2Fe-2S]-[ferredoxin] + CO2 + H(+). This Pyrococcus abyssi (strain GE5 / Orsay) protein is Ketoisovalerate oxidoreductase subunit VorB (vorB).